Reading from the N-terminus, the 436-residue chain is 3-phosphoshikimate 1-carboxyvinyltransferase (436 aa).

3-phosphoshikimate-binding residues include lysine 22, serine 23, and arginine 27. Position 22 (lysine 22) interacts with phosphoenolpyruvate. Residues glycine 95 and arginine 123 each contribute to the phosphoenolpyruvate site. The 3-phosphoshikimate site is built by serine 170, serine 171, glutamine 172, serine 201, aspartate 322, and lysine 349. A phosphoenolpyruvate-binding site is contributed by glutamine 172. Aspartate 322 functions as the Proton acceptor in the catalytic mechanism. 3 residues coordinate phosphoenolpyruvate: arginine 353, arginine 397, and lysine 422.

Belongs to the EPSP synthase family. As to quaternary structure, monomer.

The protein localises to the cytoplasm. The enzyme catalyses 3-phosphoshikimate + phosphoenolpyruvate = 5-O-(1-carboxyvinyl)-3-phosphoshikimate + phosphate. It participates in metabolic intermediate biosynthesis; chorismate biosynthesis; chorismate from D-erythrose 4-phosphate and phosphoenolpyruvate: step 6/7. In terms of biological role, catalyzes the transfer of the enolpyruvyl moiety of phosphoenolpyruvate (PEP) to the 5-hydroxyl of shikimate-3-phosphate (S3P) to produce enolpyruvyl shikimate-3-phosphate and inorganic phosphate. The sequence is that of 3-phosphoshikimate 1-carboxyvinyltransferase from Ralstonia nicotianae (strain ATCC BAA-1114 / GMI1000) (Ralstonia solanacearum).